The sequence spans 828 residues: Periplasmic nitrate reductase (828 aa).

The tat-type signal signal peptide spans 1-31; that stretch reads MKLSRRSFMKANAVAAAAAAAGLSVPGVARA. One can recognise a 4Fe-4S Mo/W bis-MGD-type domain in the interval 39–95; it reads IKWDKAPCRFCGTGCGVLVGTQQGRIVACQGDPDAPVNRGLNCIKGYFLPKIMYGKD. [4Fe-4S] cluster is bound by residues cysteine 46, cysteine 49, cysteine 53, and cysteine 81. Mo-bis(molybdopterin guanine dinucleotide) contacts are provided by residues lysine 83, glutamine 150, asparagine 175, cysteine 179, 212 to 219, 243 to 247, 262 to 264, methionine 372, glutamine 376, asparagine 482, 508 to 509, lysine 531, aspartate 558, and 718 to 727; these read WGSNMAEM, STFQH, QSD, SD, and TGRVLEHWHT. Phenylalanine 794 provides a ligand contact to substrate. Mo-bis(molybdopterin guanine dinucleotide) contacts are provided by asparagine 802 and lysine 819.

Belongs to the prokaryotic molybdopterin-containing oxidoreductase family. NasA/NapA/NarB subfamily. Component of the periplasmic nitrate reductase NapAB complex composed of NapA and NapB. [4Fe-4S] cluster is required as a cofactor. Mo-bis(molybdopterin guanine dinucleotide) serves as cofactor. Post-translationally, predicted to be exported by the Tat system. The position of the signal peptide cleavage has not been experimentally proven.

It is found in the periplasm. It carries out the reaction 2 Fe(II)-[cytochrome] + nitrate + 2 H(+) = 2 Fe(III)-[cytochrome] + nitrite + H2O. Catalytic subunit of the periplasmic nitrate reductase complex NapAB. Receives electrons from NapB and catalyzes the reduction of nitrate to nitrite. The chain is Periplasmic nitrate reductase from Citrobacter koseri (strain ATCC BAA-895 / CDC 4225-83 / SGSC4696).